The following is a 329-amino-acid chain: Aspartate carbamoyltransferase catalytic subunit (329 aa).

Positions 63 and 64 each coordinate carbamoyl phosphate. Lysine 91 is a binding site for L-aspartate. Residues arginine 113, histidine 141, and glutamine 144 each contribute to the carbamoyl phosphate site. The L-aspartate site is built by arginine 179 and arginine 234. Carbamoyl phosphate-binding residues include glycine 275 and proline 276.

This sequence belongs to the aspartate/ornithine carbamoyltransferase superfamily. ATCase family. Heterododecamer (2C3:3R2) of six catalytic PyrB chains organized as two trimers (C3), and six regulatory PyrI chains organized as three dimers (R2).

It carries out the reaction carbamoyl phosphate + L-aspartate = N-carbamoyl-L-aspartate + phosphate + H(+). The protein operates within pyrimidine metabolism; UMP biosynthesis via de novo pathway; (S)-dihydroorotate from bicarbonate: step 2/3. In terms of biological role, catalyzes the condensation of carbamoyl phosphate and aspartate to form carbamoyl aspartate and inorganic phosphate, the committed step in the de novo pyrimidine nucleotide biosynthesis pathway. This is Aspartate carbamoyltransferase catalytic subunit from Magnetococcus marinus (strain ATCC BAA-1437 / JCM 17883 / MC-1).